Consider the following 125-residue polypeptide: Small ribosomal subunit protein uS12 (125 aa).

The interval 9 to 31 (RQGREVEKIKSKSPAMENSPQRR) is disordered. The residue at position 89 (aspartate 89) is a 3-methylthioaspartic acid. Residues 105–125 (QGVKDRKQSRSKYGAKRPKAK) form a disordered region. Positions 113-125 (SRSKYGAKRPKAK) are enriched in basic residues.

The protein belongs to the universal ribosomal protein uS12 family. In terms of assembly, part of the 30S ribosomal subunit. Contacts proteins S8 and S17. May interact with IF1 in the 30S initiation complex.

With S4 and S5 plays an important role in translational accuracy. Its function is as follows. Interacts with and stabilizes bases of the 16S rRNA that are involved in tRNA selection in the A site and with the mRNA backbone. Located at the interface of the 30S and 50S subunits, it traverses the body of the 30S subunit contacting proteins on the other side and probably holding the rRNA structure together. The combined cluster of proteins S8, S12 and S17 appears to hold together the shoulder and platform of the 30S subunit. The chain is Small ribosomal subunit protein uS12 from Polaromonas naphthalenivorans (strain CJ2).